The following is a 124-amino-acid chain: MNLEYVQVVQKFNQVLLELTKKVCTVVGGSKPTYWYHHIRRVCSECPSMPMSMIGPYLNVYKSQILTKDKNFFMNFDPAHNEYTFIIQKLKEAARNMPEDELEQYWVKLLFLLKSYIKCKPFIN.

This sequence belongs to the asfivirus H124R family.

Its subcellular location is the virion. This is an uncharacterized protein from Ornithodoros (relapsing fever ticks).